The following is a 107-amino-acid chain: Large ribosomal subunit protein mL55 (107 aa).

The N-terminal 16 residues, 1–16, are a transit peptide targeting the mitochondrion; sequence MLLKQLPQAVQQIRCI.

It belongs to the mitochondrion-specific ribosomal protein mL55 family. Component of the mitochondrial ribosome large subunit (39S) which comprises a 16S rRNA and about 50 distinct proteins. As to expression, ubiquitously expressed (at protein level).

The protein resides in the mitochondrion. Involved in mitochondrial biogenesis and G2/M phase cell cycle progression. This chain is Large ribosomal subunit protein mL55 (mRpL55), found in Drosophila melanogaster (Fruit fly).